We begin with the raw amino-acid sequence, 143 residues long: Peptide methionine sulfoxide reductase MsrB (143 aa).

Residues 16-139 (DAELRRRLTP…NSAALNFESR (124 aa)) enclose the MsrB domain. Zn(2+) is bound by residues C55, C58, C104, and C107. Residue C128 is the Nucleophile of the active site.

Belongs to the MsrB Met sulfoxide reductase family. Zn(2+) serves as cofactor.

The enzyme catalyses L-methionyl-[protein] + [thioredoxin]-disulfide + H2O = L-methionyl-(R)-S-oxide-[protein] + [thioredoxin]-dithiol. This is Peptide methionine sulfoxide reductase MsrB from Burkholderia ambifaria (strain MC40-6).